Consider the following 365-residue polypeptide: MREETPEHPAPLRSGYTTGSCATATSLAAARLLLAGVVSEVAEILLPKGQHVPMPLVFCRLIGNGDEGAEAGTVKDAGDDPDVTHGAVVFARVRLVAEPGVIFRAGPGVGTVTRAGLTLPVGEPAINPVPRRMMTEHLAELAAEHAYGGGFEVTIGVEGGEALALKTMNPRLGILGGLSILGTTGIVRPFSCSAYIASIHQGIDVARANGYTHLAACTGNASEDAMRAHYGLPDIALIEMGDFVGAVLKHMKRAPVERLSVCGGFGKLSKLAAGHLDLHSRNSSIDLERLAQWAAEQGADDALQASIRAANTSQQAVALAHAQQVPLGDIVCRHALAVAREIVPPQVNVEMFAIDRRGLLIGAAQ.

Belongs to the CbiD family.

The catalysed reaction is Co-precorrin-5B + S-adenosyl-L-methionine = Co-precorrin-6A + S-adenosyl-L-homocysteine. The protein operates within cofactor biosynthesis; adenosylcobalamin biosynthesis; cob(II)yrinate a,c-diamide from sirohydrochlorin (anaerobic route): step 6/10. Its function is as follows. Catalyzes the methylation of C-1 in cobalt-precorrin-5B to form cobalt-precorrin-6A. The protein is Cobalt-precorrin-5B C(1)-methyltransferase of Paraburkholderia phytofirmans (strain DSM 17436 / LMG 22146 / PsJN) (Burkholderia phytofirmans).